Reading from the N-terminus, the 289-residue chain is Elongation factor Ts (289 aa).

Residues 82–85 form an involved in Mg(2+) ion dislocation from EF-Tu region; that stretch reads TDFL.

This sequence belongs to the EF-Ts family.

It localises to the cytoplasm. Its function is as follows. Associates with the EF-Tu.GDP complex and induces the exchange of GDP to GTP. It remains bound to the aminoacyl-tRNA.EF-Tu.GTP complex up to the GTP hydrolysis stage on the ribosome. The sequence is that of Elongation factor Ts from Pseudomonas aeruginosa (strain LESB58).